The primary structure comprises 370 residues: Sensor protein GtcS (370 aa).

Helical transmembrane passes span 2 to 22 and 40 to 60; these read ITAY…VFYL and AWIV…VYLY. Residues 66 to 118 enclose the HAMP domain; it reads KRITGPLEKITDAIQKMREGEFAQRLCFKADYELTLIQEHFNEMVAHLEKTEA. The region spanning 133–355 is the Histidine kinase domain; it reads DLSHDFKTPI…RLENDLPYRL (223 aa).

Its subcellular location is the cell membrane. The enzyme catalyses ATP + protein L-histidine = ADP + protein N-phospho-L-histidine.. Functionally, member of the two-component regulatory system GtcS/GtcR which may act in the control of the transcription of the grs operon which encodes the multienzymes involved in the biosynthesis of the peptide antibiotic gramicidin S. Probably activates GtcR by phosphorylation. The protein is Sensor protein GtcS (gtcS) of Aneurinibacillus migulanus (Bacillus migulanus).